The sequence spans 256 residues: Calsenilin (256 aa).

Positions 1–22 (MQRTKEAVKASDGNLLGDPGRI) are disordered. A Glycyl lysine isopeptide (Lys-Gly) (interchain with G-Cter in SUMO1) cross-link involves residue K26. 2 S-palmitoyl cysteine lipidation sites follow: C45 and C46. Phosphoserine is present on residues S60 and S63. The region spanning 67–123 (LELSTVRHQPEGLDQLQAQTKFTKKELQSLYRGFKNECPTGLVDEDTFKLIYSQFFP) is the EF-hand 1; degenerate domain. A Glycyl lysine isopeptide (Lys-Gly) (interchain with G-Cter in SUMO1) cross-link involves residue K90. 3 consecutive EF-hand domains span residues 126–161 (DATT…LLRG), 162–197 (TVHE…IYDM), and 210–245 (APLE…DENI). Ca(2+) contacts are provided by D175, N177, D179, C181, E186, D223, N225, D227, and E234. The tract at residues 243–256 (ENIMNSMQLFENVI) is interaction with KCND2.

It belongs to the recoverin family. Binds to DNA as a homomultimer. Dimerization is induced by binding to calcium. Interacts with the C-terminus of PSEN1 and PSEN2 and with PSEN2 CTF subunit. Associates with KCN1. Component of heteromultimeric potassium channels. Identified in potassium channel complexes containing KCND1, KCND2, KCND3, KCNIP1, KCNIP2, KCNIP3, KCNIP4, DPP6 and DPP10. Interacts with KCND2 and KCND3. In terms of processing, palmitoylated. Palmitoylation enhances association with the plasma membrane. Post-translationally, proteolytically cleaved by caspase-3. In terms of tissue distribution, highly expressed in brain. Isoform 1 or isoform 4 (T+ forms) are expressed at equal levels with isoform 2 or isoform 3 (T- forms). Primarily detected in the layer V and deep layer VI of the cerebral cortex, the hippocampus, and the entire cerebellum. Expressed at low levels in testis. Also expressed in heart.

It localises to the cytoplasm. Its subcellular location is the cell membrane. The protein localises to the endoplasmic reticulum. The protein resides in the golgi apparatus. It is found in the nucleus. Calcium-dependent transcriptional repressor that binds to the DRE element of genes including PDYN and FOS. Affinity for DNA is reduced upon binding to calcium and enhanced by binding to magnesium. Seems to be involved in nociception. Its function is as follows. Regulatory subunit of Kv4/D (Shal)-type voltage-gated rapidly inactivating A-type potassium channels, such as KCND2/Kv4.2 and KCND3/Kv4.3. Modulates channel expression at the cell membrane, gating characteristics, inactivation kinetics and rate of recovery from inactivation in a calcium-dependent and isoform-specific manner. In terms of biological role, may play a role in the regulation of PSEN2 proteolytic processing and apoptosis. Together with PSEN2 involved in modulation of amyloid-beta formation. The chain is Calsenilin (Kcnip3) from Mus musculus (Mouse).